Consider the following 867-residue polypeptide: Valine--tRNA ligase (867 aa).

The short motif at 42 to 52 (PNITGKIHMGH) is the 'HIGH' region element. A 'KMSKS' region motif is present at residues 521-525 (KMSKS). Lys-524 serves as a coordination point for ATP. The stretch at 794–867 (LGTLIDVKSE…QIISDLEAKA (74 aa)) forms a coiled coil.

Belongs to the class-I aminoacyl-tRNA synthetase family. ValS type 1 subfamily. Monomer.

The protein localises to the cytoplasm. The catalysed reaction is tRNA(Val) + L-valine + ATP = L-valyl-tRNA(Val) + AMP + diphosphate. Its function is as follows. Catalyzes the attachment of valine to tRNA(Val). As ValRS can inadvertently accommodate and process structurally similar amino acids such as threonine, to avoid such errors, it has a 'posttransfer' editing activity that hydrolyzes mischarged Thr-tRNA(Val) in a tRNA-dependent manner. This chain is Valine--tRNA ligase, found in Fervidobacterium nodosum (strain ATCC 35602 / DSM 5306 / Rt17-B1).